A 514-amino-acid chain; its full sequence is ATP synthase subunit alpha (514 aa).

170–177 (GDRQTGKT) serves as a coordination point for ATP.

This sequence belongs to the ATPase alpha/beta chains family. In terms of assembly, F-type ATPases have 2 components, CF(1) - the catalytic core - and CF(0) - the membrane proton channel. CF(1) has five subunits: alpha(3), beta(3), gamma(1), delta(1), epsilon(1). CF(0) has three main subunits: a(1), b(2) and c(9-12). The alpha and beta chains form an alternating ring which encloses part of the gamma chain. CF(1) is attached to CF(0) by a central stalk formed by the gamma and epsilon chains, while a peripheral stalk is formed by the delta and b chains.

The protein localises to the cell inner membrane. The enzyme catalyses ATP + H2O + 4 H(+)(in) = ADP + phosphate + 5 H(+)(out). Produces ATP from ADP in the presence of a proton gradient across the membrane. The alpha chain is a regulatory subunit. This is ATP synthase subunit alpha from Psychrobacter arcticus (strain DSM 17307 / VKM B-2377 / 273-4).